Consider the following 173-residue polypeptide: Co-chaperone protein HscB (173 aa).

The J domain maps to 2 to 74; the sequence is DYFTLFGLPA…LKRAEYMLSQ (73 aa).

Belongs to the HscB family. Interacts with HscA and stimulates its ATPase activity. Interacts with IscU.

Functionally, co-chaperone involved in the maturation of iron-sulfur cluster-containing proteins. Seems to help targeting proteins to be folded toward HscA. In Xenorhabdus nematophila (strain ATCC 19061 / DSM 3370 / CCUG 14189 / LMG 1036 / NCIMB 9965 / AN6), this protein is Co-chaperone protein HscB.